Reading from the N-terminus, the 579-residue chain is Proline--tRNA ligase (579 aa).

It belongs to the class-II aminoacyl-tRNA synthetase family. ProS type 1 subfamily. Homodimer.

It is found in the cytoplasm. The catalysed reaction is tRNA(Pro) + L-proline + ATP = L-prolyl-tRNA(Pro) + AMP + diphosphate. Catalyzes the attachment of proline to tRNA(Pro) in a two-step reaction: proline is first activated by ATP to form Pro-AMP and then transferred to the acceptor end of tRNA(Pro). As ProRS can inadvertently accommodate and process non-cognate amino acids such as alanine and cysteine, to avoid such errors it has two additional distinct editing activities against alanine. One activity is designated as 'pretransfer' editing and involves the tRNA(Pro)-independent hydrolysis of activated Ala-AMP. The other activity is designated 'posttransfer' editing and involves deacylation of mischarged Ala-tRNA(Pro). The misacylated Cys-tRNA(Pro) is not edited by ProRS. This is Proline--tRNA ligase from Chlamydia muridarum (strain MoPn / Nigg).